Here is a 130-residue protein sequence, read N- to C-terminus: Small ribosomal subunit protein bS16 (130 aa).

The interval 82 to 130 (VLPKTERNNPKKAVPGKKAQDRAEEKAAKAAEASEAPADEAPAEEAAAE) is disordered. Positions 99–110 (KAQDRAEEKAAK) are enriched in basic and acidic residues. Residues 118 to 130 (PADEAPAEEAAAE) are compositionally biased toward acidic residues.

The protein belongs to the bacterial ribosomal protein bS16 family.

The chain is Small ribosomal subunit protein bS16 from Dinoroseobacter shibae (strain DSM 16493 / NCIMB 14021 / DFL 12).